The chain runs to 480 residues: Sestrin-2 (480 aa).

N-acetylmethionine is present on Met-1. Positions 20 to 43 (RGGVAGPETREEHREGQARRGSRG) are disordered. Residues 27–37 (ETREEHREGQA) are compositionally biased toward basic and acidic residues. The segment at 66-239 (GLEALMSSGR…APSPPSEQGT (174 aa)) is N-terminal domain; mediates the alkylhydroperoxide reductase activity. Cys-125 acts as the Cysteine sulfenic acid (-SOH) intermediate in catalysis. Lys-175 participates in a covalent cross-link: Glycyl lysine isopeptide (Lys-Gly) (interchain with G-Cter in ubiquitin). Disordered stretches follow at residues 221-251 (DAEGSPASQAPSPPSEQGTPPSGDPLNNSGG) and 272-291 (LLRDEGASQEEMENRFELEK). The span at 223–238 (EGSPASQAPSPPSEQG) shows a compositional bias: low complexity. Ser-249 is subject to Phosphoserine. Positions 308 to 480 (PHPDILCFVE…ALRAITRYMT (173 aa)) are C-terminal domain; mediates TORC1 regulation. Residues 374–377 (TYNT), Thr-386, and Glu-451 contribute to the L-leucine site.

The protein belongs to the sestrin family. Interacts with the GATOR2 complex which is composed of MIOS, SEC13, SEH1L, WDR24 and WDR59; the interaction is negatively regulated by leucine. Conveys leucine availability via direct interaction with SEH1L and WDR24 components of the GATOR2 complex. Interacts with RRAGA, RRAGB, RRAGC and RRAGD; may function as a guanine nucleotide dissociation inhibitor for RRAGs and regulate them. May interact with the TORC2 complex. Interacts with KEAP1, RBX1, SQSTM and ULK1; to regulate the degradation of KEAP1. May also associate with the complex composed of TSC1, TSC2 and the AMP-responsive protein kinase/AMPK to regulate TORC1 signaling. May interact with PRDX1. Post-translationally, phosphorylated by ULK1 at multiple sites. In terms of processing, ubiquitinated at Lys-175 by RNF167 via 'Lys-63'-linked polyubiquitination in response to leucine deprivation: ubiquitination promotes SESN2-interaction with the GATOR2 complex, leading to inhibit the TORC1 signaling pathway. Deubiquitinated at Lys-175 by STAMBPL1, promoting the TORC1 signaling pathway. Ubiquitinated by RNF186; ubiquitination mediates proteasomal degradation. Detected in heart, liver and skeletal muscles (at protein level).

It is found in the cytoplasm. It carries out the reaction a hydroperoxide + L-cysteinyl-[protein] = S-hydroxy-L-cysteinyl-[protein] + an alcohol. In terms of biological role, functions as an intracellular leucine sensor that negatively regulates the mTORC1 signaling pathway through the GATOR complex. In absence of leucine, binds the GATOR subcomplex GATOR2 and prevents mTORC1 signaling. Binding of leucine to SESN2 disrupts its interaction with GATOR2 thereby activating the TORC1 signaling pathway. This stress-inducible metabolic regulator also plays a role in protection against oxidative and genotoxic stresses. May negatively regulate protein translation in response to endoplasmic reticulum stress, via mTORC1. May positively regulate the transcription by NFE2L2 of genes involved in the response to oxidative stress by facilitating the SQSTM1-mediated autophagic degradation of KEAP1. May also mediate TP53 inhibition of TORC1 signaling upon genotoxic stress. Moreover, may prevent the accumulation of reactive oxygen species (ROS) through the alkylhydroperoxide reductase activity born by the N-terminal domain of the protein. Was originally reported to contribute to oxidative stress resistance by reducing PRDX1. However, this could not be confirmed. This chain is Sestrin-2, found in Mus musculus (Mouse).